The sequence spans 413 residues: Chloramphenicol resistance protein CraA (413 aa).

Transmembrane regions (helical) follow at residues 18-38 (LMFP…NDLI), 55-75 (WAPS…WLLG), 84-104 (KKVL…ILLT), 110-130 (FLTL…VGYA), 147-167 (LMAN…AFLI), 170-190 (VSWH…WVGL), 228-248 (ALPL…IILV), 260-280 (LAQF…IKII), 289-309 (VLIG…GVVW), 312-332 (YLIP…GISF), 349-369 (TVAA…IELV), and 373-393 (YTQF…ALWF).

Belongs to the major facilitator superfamily.

Its subcellular location is the cell inner membrane. Functionally, efflux pump that mediates resistance to chloramphenicol. The polypeptide is Chloramphenicol resistance protein CraA (Acinetobacter baumannii (strain ATCC 19606 / DSM 30007 / JCM 6841 / CCUG 19606 / CIP 70.34 / NBRC 109757 / NCIMB 12457 / NCTC 12156 / 81)).